A 344-amino-acid polypeptide reads, in one-letter code: RNA 3'-terminal phosphate cyclase (344 aa).

ATP-binding positions include glutamine 103 and histidine 283 to glutamine 287. The active-site Tele-AMP-histidine intermediate is the histidine 308.

It belongs to the RNA 3'-terminal cyclase family. Type 1 subfamily.

Its subcellular location is the cytoplasm. The enzyme catalyses a 3'-end 3'-phospho-ribonucleotide-RNA + ATP = a 3'-end 2',3'-cyclophospho-ribonucleotide-RNA + AMP + diphosphate. Catalyzes the conversion of 3'-phosphate to a 2',3'-cyclic phosphodiester at the end of RNA. The mechanism of action of the enzyme occurs in 3 steps: (A) adenylation of the enzyme by ATP; (B) transfer of adenylate to an RNA-N3'P to produce RNA-N3'PP5'A; (C) and attack of the adjacent 2'-hydroxyl on the 3'-phosphorus in the diester linkage to produce the cyclic end product. The biological role of this enzyme is unknown but it is likely to function in some aspects of cellular RNA processing. The protein is RNA 3'-terminal phosphate cyclase of Salmonella agona (strain SL483).